We begin with the raw amino-acid sequence, 211 residues long: Large ribosomal subunit protein eL13 (211 aa).

Position 16 is an N6-acetyllysine (Lys-16). 3 positions are modified to phosphoserine: Ser-52, Ser-77, and Ser-106. Residues Lys-123 and Lys-145 each participate in a glycyl lysine isopeptide (Lys-Gly) (interchain with G-Cter in SUMO2) cross-link. Lys-174 participates in a covalent cross-link: Glycyl lysine isopeptide (Lys-Gly) (interchain with G-Cter in SUMO1); alternate. Residues Lys-174 and Lys-177 each participate in a glycyl lysine isopeptide (Lys-Gly) (interchain with G-Cter in SUMO2); alternate cross-link. Position 177 is an N6-acetyllysine; alternate (Lys-177).

It belongs to the eukaryotic ribosomal protein eL13 family. Component of the 60S large ribosomal subunit (LSU).

The protein localises to the cytoplasm. Component of the ribosome, a large ribonucleoprotein complex responsible for the synthesis of proteins in the cell. The small ribosomal subunit (SSU) binds messenger RNAs (mRNAs) and translates the encoded message by selecting cognate aminoacyl-transfer RNA (tRNA) molecules. The large subunit (LSU) contains the ribosomal catalytic site termed the peptidyl transferase center (PTC), which catalyzes the formation of peptide bonds, thereby polymerizing the amino acids delivered by tRNAs into a polypeptide chain. The nascent polypeptides leave the ribosome through a tunnel in the LSU and interact with protein factors that function in enzymatic processing, targeting, and the membrane insertion of nascent chains at the exit of the ribosomal tunnel. As part of the LSU, it is probably required for its formation and the maturation of rRNAs. Plays a role in bone development. This is Large ribosomal subunit protein eL13 (RPL13) from Cricetulus griseus (Chinese hamster).